Here is a 370-residue protein sequence, read N- to C-terminus: S-adenosylmethionine decarboxylase proenzyme (370 aa).

Residue Phe-28 participates in substrate binding. Active-site residues include Glu-29 and Glu-32. Glu-85 serves as a coordination point for substrate. Catalysis depends on Ser-86, which acts as the Schiff-base intermediate with substrate; via pyruvic acid. Ser-86 is subject to Pyruvic acid (Ser); by autocatalysis. Cys-100 (proton donor; for catalytic activity) is an active-site residue. Residues Ser-250 and His-263 each act as proton acceptor; for processing activity in the active site. Position 267 (Glu-267) interacts with substrate.

It belongs to the eukaryotic AdoMetDC family. In terms of assembly, forms a heterodimer with catalytically inactive AdoMetDC prozyme; heterodimerization is required to activate AdoMetDC. Requires pyruvate as cofactor. Post-translationally, is synthesized initially as an inactive proenzyme. Formation of the active enzyme involves a self-maturation process in which the active site pyruvoyl group is generated from an internal serine residue via an autocatalytic post-translational modification. Two non-identical subunits are generated from the proenzyme in this reaction, and the pyruvate is formed at the N-terminus of the alpha chain, which is derived from the carboxyl end of the proenzyme. The post-translation cleavage follows an unusual pathway, termed non-hydrolytic serinolysis, in which the side chain hydroxyl group of the serine supplies its oxygen atom to form the C-terminus of the beta chain, while the remainder of the serine residue undergoes an oxidative deamination to the alpha chain.

The catalysed reaction is S-adenosyl-L-methionine + H(+) = S-adenosyl 3-(methylsulfanyl)propylamine + CO2. Its pathway is amine and polyamine biosynthesis; S-adenosylmethioninamine biosynthesis; S-adenosylmethioninamine from S-adenosyl-L-methionine: step 1/1. Its activity is regulated as follows. Allosterically activated by AdoMetDC prozyme. Activated by putrescine. Inhibited by spermine and methylglyoxal-bis(guanylhydrazone) (MGBG) and slightly by spermidine. Inhibited by 5'-([(Z)-4-amino-2-butenyl]methylamino)-5'-deoxyadenosine (MDL 73811). Functionally, probably in association with catalytically inactive AdoMetDC prozyme, catalyzes the decarboxylation of S-adenosyl-L-methionine which is essential for the biosynthesis of the polyamine spermidine. Required for growth and survival during the bloodstream life cycle stage. This Trypanosoma cruzi protein is S-adenosylmethionine decarboxylase proenzyme.